The primary structure comprises 198 residues: Peptidyl-tRNA hydrolase (198 aa).

Tyrosine 15 lines the tRNA pocket. The active-site Proton acceptor is the histidine 20. Positions 66, 68, and 114 each coordinate tRNA.

The protein belongs to the PTH family. In terms of assembly, monomer.

Its subcellular location is the cytoplasm. It catalyses the reaction an N-acyl-L-alpha-aminoacyl-tRNA + H2O = an N-acyl-L-amino acid + a tRNA + H(+). Hydrolyzes ribosome-free peptidyl-tRNAs (with 1 or more amino acids incorporated), which drop off the ribosome during protein synthesis, or as a result of ribosome stalling. Its function is as follows. Catalyzes the release of premature peptidyl moieties from peptidyl-tRNA molecules trapped in stalled 50S ribosomal subunits, and thus maintains levels of free tRNAs and 50S ribosomes. This is Peptidyl-tRNA hydrolase from Cupriavidus metallidurans (strain ATCC 43123 / DSM 2839 / NBRC 102507 / CH34) (Ralstonia metallidurans).